The following is a 464-amino-acid chain: UDP-N-acetylmuramoylalanine--D-glutamate ligase (464 aa).

112–118 (GTDGKTT) serves as a coordination point for ATP.

Belongs to the MurCDEF family.

Its subcellular location is the cytoplasm. The catalysed reaction is UDP-N-acetyl-alpha-D-muramoyl-L-alanine + D-glutamate + ATP = UDP-N-acetyl-alpha-D-muramoyl-L-alanyl-D-glutamate + ADP + phosphate + H(+). Its pathway is cell wall biogenesis; peptidoglycan biosynthesis. Cell wall formation. Catalyzes the addition of glutamate to the nucleotide precursor UDP-N-acetylmuramoyl-L-alanine (UMA). This Chlorobium phaeobacteroides (strain DSM 266 / SMG 266 / 2430) protein is UDP-N-acetylmuramoylalanine--D-glutamate ligase.